Reading from the N-terminus, the 260-residue chain is Voltage-dependent calcium channel gamma-6 subunit (260 aa).

4 helical membrane passes run 43 to 63, 143 to 163, 169 to 189, and 221 to 241; these read LLVA…EFWV, VIAV…IMVL, SLLR…FVSL, and LGCG…FLLL.

The protein belongs to the PMP-22/EMP/MP20 family. CACNG subfamily. In terms of assembly, interacts with CACNA1C. Identified in a complex with the L-type calcium channel subunits CACNA1C, CACNA2D1 and either CACNB1 or CACNB2. As to expression, detected in brain and heart (at protein level).

It is found in the cell membrane. Functionally, regulates the activity of L-type calcium channels that contain CACNA1C as pore-forming subunit. This chain is Voltage-dependent calcium channel gamma-6 subunit (Cacng6), found in Mus musculus (Mouse).